We begin with the raw amino-acid sequence, 419 residues long: Protein farnesyltransferase subunit beta (419 aa).

5 PFTB repeats span residues 68 to 109 (EDNT…ITLG), 119 to 160 (RNKL…SVLN), 167 to 208 (IKNV…ILIG), 215 to 256 (LPRL…ALLQ), and 329 to 371 (SIAL…SLCQ). Residues 193–196 (HGGY) and 235–238 (RTNK) each bind (2E,6E)-farnesyl diphosphate. 2 residues coordinate Zn(2+): aspartate 241 and cysteine 243. (2E,6E)-farnesyl diphosphate is bound at residue 244–247 (YSFW). Residue histidine 359 coordinates Zn(2+).

This sequence belongs to the protein prenyltransferase subunit beta family. As to quaternary structure, heterodimer of FTA and FTB. Requires Zn(2+) as cofactor.

It catalyses the reaction L-cysteinyl-[protein] + (2E,6E)-farnesyl diphosphate = S-(2E,6E)-farnesyl-L-cysteinyl-[protein] + diphosphate. Functionally, catalyzes the transfer of a farnesyl moiety from farnesyl diphosphate to a cysteine at the fourth position from the C-terminus of several proteins. The beta subunit FTB is responsible for peptide-binding. The sequence is that of Protein farnesyltransferase subunit beta (FTB) from Pisum sativum (Garden pea).